The primary structure comprises 269 residues: Elongation factor Ts (269 aa).

The segment at 76–79 is involved in Mg(2+) ion dislocation from EF-Tu; the sequence is TDFV.

It belongs to the EF-Ts family.

Its subcellular location is the cytoplasm. Its function is as follows. Associates with the EF-Tu.GDP complex and induces the exchange of GDP to GTP. It remains bound to the aminoacyl-tRNA.EF-Tu.GTP complex up to the GTP hydrolysis stage on the ribosome. This chain is Elongation factor Ts, found in Deinococcus geothermalis (strain DSM 11300 / CIP 105573 / AG-3a).